We begin with the raw amino-acid sequence, 344 residues long: Dihydroorotate dehydrogenase (quinone) (344 aa).

FMN-binding positions include 65–69 (AGLDK) and T89. K69 contacts substrate. Position 114–118 (114–118 (NRMGF)) interacts with substrate. FMN-binding residues include N142 and N175. N175 is a binding site for substrate. The active-site Nucleophile is S178. N180 provides a ligand contact to substrate. 2 residues coordinate FMN: K220 and T248. 249–250 (NT) contributes to the substrate binding site. FMN-binding positions include G271, G300, and 321 to 322 (YT).

This sequence belongs to the dihydroorotate dehydrogenase family. Type 2 subfamily. As to quaternary structure, monomer. FMN serves as cofactor.

The protein resides in the cell membrane. The catalysed reaction is (S)-dihydroorotate + a quinone = orotate + a quinol. It functions in the pathway pyrimidine metabolism; UMP biosynthesis via de novo pathway; orotate from (S)-dihydroorotate (quinone route): step 1/1. Its function is as follows. Catalyzes the conversion of dihydroorotate to orotate with quinone as electron acceptor. The polypeptide is Dihydroorotate dehydrogenase (quinone) (Paraburkholderia phymatum (strain DSM 17167 / CIP 108236 / LMG 21445 / STM815) (Burkholderia phymatum)).